The chain runs to 246 residues: Homeobox protein Crxos (246 aa).

2 DNA-binding regions (homeobox) span residues 22–72 (WEQL…EMRP) and 129–182 (ELTD…RGYR). Positions 163 to 177 (RKDLIRSWFITQRHR) match the Nuclear localization signal motif.

This sequence belongs to the paired homeobox family. Specifically expressed during the preimplantation stages of embryonic development, between the four-cell to eight-cell stage and the morula stage. Expressed in adult testis. In terms of tissue distribution, detected in early embryos; expression decreases gradually with embryonic development. Also expressed in extraembryonic tissues after E14.5, expression level increases drastically until E18.5, immediately before partum.

The protein resides in the nucleus. Its function is as follows. Transcription factor that acts as a regulator of embryonic stem cell differentiation during the preimplantation stages of embryonic development. In terms of biological role, transcription factor that acts as a positive regulator of embryonic stem cell differentiation. Functionally, transcription factor that promotes embryonic stem cell pluripotency. Transcription factor that promotes embryonic stem cell pluripotency. Also involved in extraembryonic tissues development by promoting the expression of placental prolactin family genes. The sequence is that of Homeobox protein Crxos from Mus musculus (Mouse).